The chain runs to 125 residues: Secreted RxLR effector protein RXLR-C13 (125 aa).

The N-terminal stretch at 1–23 is a signal peptide; it reads MVNSLTFTLVVVCLVRSCDGVAA. The RxLR-dEER signature appears at 43–73; that stretch reads RVLQETATANDDVKKLSTSTKVDSKLNQEIK. Residue N85 is glycosylated (N-linked (GlcNAc...) asparagine). A helical membrane pass occupies residues 106–123; the sequence is FFILATILLFPIAAYMVA.

Belongs to the RxLR effector family.

The protein localises to the secreted. It localises to the host endoplasmic reticulum membrane. Its function is as follows. Secreted effector that does not suppress pattern-triggered immunity (PTI) in plant host. This chain is Secreted RxLR effector protein RXLR-C13, found in Plasmopara halstedii (Downy mildew of sunflower).